Reading from the N-terminus, the 467-residue chain is Acetaldehyde dehydrogenase (acetylating) EutE (467 aa).

Residues 1–19 (MNQQDIEQVVKAVLLKMKD) are targets protein to the BMC.

The protein belongs to the EutE/PduP family. As to quaternary structure, interacts with EutS, which targets it to the interior of the BMC.

Its subcellular location is the bacterial microcompartment. The enzyme catalyses acetaldehyde + NAD(+) + CoA = acetyl-CoA + NADH + H(+). The protein operates within amine and polyamine degradation; ethanolamine degradation. In terms of biological role, acts as the second step in ethanolamine degradation by converting acetaldehyde into acetyl-CoA. Has a very strong preference for NAD(+) over NADP(+) in both catalytic directions. May play a role in bacterial microcompartment (BMC) assembly or maintenance. Directly targeted to the BMC. Functionally, expression of the eut operon allows this bacteria to use ethanolamine (EA) as a carbon, nitrogen and energy source. It relies on cobalamin (vitamin B12) both as a cofactor for the ethanolamine ammonia-lyase (EAL) activity and to induce the operon. EA enhances bacterial survival in macrophages in a concentration-dependent manner, suggesting it is an important nutrient during infection. This is Acetaldehyde dehydrogenase (acetylating) EutE from Salmonella typhimurium (strain LT2 / SGSC1412 / ATCC 700720).